We begin with the raw amino-acid sequence, 852 residues long: Elongation factor 2 (852 aa).

A tr-type G domain is found at 17-356; that stretch reads RNIRNMSVIA…MIAFHLPSPV (340 aa). A GTP-binding site is contributed by 26 to 33; the sequence is AHVDHGKS. Residues Thr-57 and Thr-59 each carry the phosphothreonine modification. GTP-binding positions include 170-173 and 227-229; these read NKMD and SGL. Residue His-709 is modified to Diphthamide.

The protein belongs to the TRAFAC class translation factor GTPase superfamily. Classic translation factor GTPase family. EF-G/EF-2 subfamily. Post-translationally, phosphorylation by EF-2 kinase completely inactivates EF-2. In terms of processing, AMPylated by fic-1.

It is found in the cytoplasm. It catalyses the reaction GTP + H2O = GDP + phosphate + H(+). In terms of biological role, catalyzes the GTP-dependent ribosomal translocation step during translation elongation. During this step, the ribosome changes from the pre-translocational (PRE) to the post-translocational (POST) state as the newly formed A-site-bound peptidyl-tRNA and P-site-bound deacylated tRNA move to the P and E sites, respectively. Catalyzes the coordinated movement of the two tRNA molecules, the mRNA and conformational changes in the ribosome. Involved in the morphogenesis of epidermal tissues. The sequence is that of Elongation factor 2 (eef-2) from Caenorhabditis elegans.